The sequence spans 692 residues: Serine/threonine-protein kinase Nek8 (692 aa).

The Protein kinase domain maps to tyrosine 4 to cysteine 258. ATP contacts are provided by residues valine 10–valine 18 and lysine 33. The active-site Proton acceptor is aspartate 128. At threonine 162 the chain carries Phosphothreonine; by autocatalysis. Residues alanine 277–glycine 301 are disordered. Polar residues predominate over residues alanine 282–valine 293. RCC1 repeat units follow at residues serine 312–serine 350, glycine 410–glutamate 461, arginine 462–proline 513, glycine 580–glutamate 631, and serine 632–serine 684.

Belongs to the protein kinase superfamily. NEK Ser/Thr protein kinase family. NIMA subfamily. In terms of assembly, interacts with PKD2; may regulate PKD2 targeting to the cilium. Interacts with ANKS6. Component of a complex containing at least ANKS6, INVS, NEK8 and NPHP3. ANKS6 may organize complex assembly by linking INVS and NPHP3 to NEK8 and INVS may target the complex to the proximal ciliary axoneme. Interacts with ANKS3. It depends on Mg(2+) as a cofactor. In terms of tissue distribution, highest expression in thyroid, adrenal gland and skin. Low levels in spleen, colon and uterus. Overexpressed in breast tumors, with highest expression in infiltrating ductal carcinomas and moderate levels in mucinous adenocarcinoma.

The protein localises to the cytoplasm. It localises to the cytoskeleton. Its subcellular location is the cell projection. The protein resides in the cilium. It is found in the microtubule organizing center. The protein localises to the centrosome. It localises to the cilium axoneme. The catalysed reaction is L-seryl-[protein] + ATP = O-phospho-L-seryl-[protein] + ADP + H(+). The enzyme catalyses L-threonyl-[protein] + ATP = O-phospho-L-threonyl-[protein] + ADP + H(+). In terms of biological role, required for renal tubular integrity. May regulate local cytoskeletal structure in kidney tubule epithelial cells. May regulate ciliary biogenesis through targeting of proteins to the cilia. Plays a role in organogenesis, and is involved in the regulation of the Hippo signaling pathway. The sequence is that of Serine/threonine-protein kinase Nek8 (NEK8) from Homo sapiens (Human).